The primary structure comprises 343 residues: Uroporphyrinogen decarboxylase (343 aa).

Substrate is bound by residues 25–29 (RQAGR), phenylalanine 44, aspartate 75, tyrosine 150, serine 205, and histidine 320.

The protein belongs to the uroporphyrinogen decarboxylase family. As to quaternary structure, homodimer.

The protein localises to the cytoplasm. The enzyme catalyses uroporphyrinogen III + 4 H(+) = coproporphyrinogen III + 4 CO2. It functions in the pathway porphyrin-containing compound metabolism; protoporphyrin-IX biosynthesis; coproporphyrinogen-III from 5-aminolevulinate: step 4/4. Its function is as follows. Catalyzes the decarboxylation of four acetate groups of uroporphyrinogen-III to yield coproporphyrinogen-III. This is Uroporphyrinogen decarboxylase from Mesorhizobium japonicum (strain LMG 29417 / CECT 9101 / MAFF 303099) (Mesorhizobium loti (strain MAFF 303099)).